A 1871-amino-acid polypeptide reads, in one-letter code: Plexin-A3 (1871 aa).

The signal sequence occupies residues 1–19; sequence MPSVCLLLLLFLAVGGALG. Residues 20-488 form the Sema domain; that stretch reads NRPFRAFVVT…SEKQVSQLPV (469 aa). Residues 20-1220 lie on the Extracellular side of the membrane; it reads NRPFRAFVVT…SAERALTLPA (1201 aa). N-linked (GlcNAc...) asparagine glycosylation is present at asparagine 59. Disulfide bonds link cysteine 77/cysteine 86, cysteine 112/cysteine 120, cysteine 266/cysteine 387, cysteine 282/cysteine 338, cysteine 356/cysteine 375, cysteine 491/cysteine 508, cysteine 497/cysteine 539, cysteine 500/cysteine 517, and cysteine 511/cysteine 523. N-linked (GlcNAc...) asparagine glycosylation is present at asparagine 548. Cysteine 574 and cysteine 594 form a disulfide bridge. Residues asparagine 637, asparagine 738, and asparagine 746 are each glycosylated (N-linked (GlcNAc...) asparagine). IPT/TIG domains lie at 840-933, 935-1020, 1023-1122, and 1125-1211; these read PRIT…YSFV, PTFD…YTYT, PTVT…FTYY, and PSFE…LHIS. 5 N-linked (GlcNAc...) asparagine glycosylation sites follow: asparagine 1009, asparagine 1036, asparagine 1073, asparagine 1115, and asparagine 1162. Residues 1221 to 1241 traverse the membrane as a helical segment; it reads MMGLAAGGGLLLLAITAVLVA. The Cytoplasmic portion of the chain corresponds to 1242 to 1871; it reads YKRKTQDADR…QIISLVSSDS (630 aa). Serine 1596 is modified (phosphoserine).

Belongs to the plexin family. In terms of assembly, interacts with CBFA2T3/MTG16.

It localises to the cell membrane. Coreceptor for SEMA3A and SEMA3F. Necessary for signaling by class 3 semaphorins and subsequent remodeling of the cytoskeleton. Plays a role in axon guidance in the developing nervous system. Regulates the migration of sympathetic neurons, but not of neural crest precursors. Required for normal dendrite spine morphology in pyramidal neurons. May play a role in regulating semaphorin-mediated programmed cell death in the developing nervous system. Class 3 semaphorins bind to a complex composed of a neuropilin and a plexin. The plexin modulates the affinity of the complex for specific semaphorins, and its cytoplasmic domain is required for the activation of down-stream signaling events in the cytoplasm. The polypeptide is Plexin-A3 (PLXNA3) (Homo sapiens (Human)).